The chain runs to 82 residues: U6 snRNA-associated Sm-like protein LSm6 (82 aa).

In terms of domain architecture, Sm spans 13–82 (DPSGFLSEII…GNNVMYISAD (70 aa)).

The protein belongs to the snRNP Sm proteins family. SmF/LSm6 subfamily. As to quaternary structure, component of the heptameric LSM1-LSM7 complex, which consists of snr-1/lsm1, snr-2/lsm2, snr-3/lsm3, snr-4/lsm4, snr-5/lsm5, snr-6/lsm6 and snr-7/lsm7. Component of the heptameric LSM2-LSM8 complex, which consists of snr-2/lsm2, snr-3/lsm3, snr-4/lsm4, snr-5/lsm5, snr-6/lsm6, snr-7/lsm7 and snr-8/lsm8. The LSm subunits form a seven-membered ring structure with a doughnut shape.

It localises to the cytoplasm. The protein resides in the nucleus. In terms of biological role, component of LSm protein complexes, which are involved in RNA processing and may function in a chaperone-like manner, facilitating the efficient association of RNA processing factors with their substrates. Component of the cytoplasmic LSM1-LSM7 complex, which is thought to be involved in mRNA degradation by activating the decapping step in the 5'-to-3' mRNA decay pathway. Component of the nuclear LSM2-LSM8 complex, which is involved in splicing of nuclear mRNAs. LSM2-LSM8 associates with multiple snRNP complexes containing the U6 snRNA (U4/U6 di-snRNP, spliceosomal U4/U6.U5 tri-snRNP, and free U6 snRNP). It binds directly to the 3'-terminal U-tract of U6 snRNA and plays a role in the biogenesis and stability of the U6 snRNP and U4/U6 snRNP complexes. LSM2-LSM8 probably also is involved degradation of nuclear pre-mRNA by targeting them for decapping, and in processing of pre-tRNAs, pre-rRNAs and U3 snoRNA. This chain is U6 snRNA-associated Sm-like protein LSm6 (snr-6), found in Neurospora crassa (strain ATCC 24698 / 74-OR23-1A / CBS 708.71 / DSM 1257 / FGSC 987).